A 714-amino-acid polypeptide reads, in one-letter code: Fatty acid oxidation complex subunit alpha (714 aa).

Residues 1–190 (MEMASAFTLN…KLGLVDDVVP (190 aa)) are enoyl-CoA hydratase. The interval 306 to 714 (APLNSVGILG…FWKTTATDLQ (409 aa)) is 3-hydroxyacyl-CoA dehydrogenase.

This sequence in the N-terminal section; belongs to the enoyl-CoA hydratase/isomerase family. In the central section; belongs to the 3-hydroxyacyl-CoA dehydrogenase family. In terms of assembly, heterotetramer of two alpha chains (FadJ) and two beta chains (FadI).

It localises to the cytoplasm. It carries out the reaction a (3S)-3-hydroxyacyl-CoA = a (2E)-enoyl-CoA + H2O. The catalysed reaction is a 4-saturated-(3S)-3-hydroxyacyl-CoA = a (3E)-enoyl-CoA + H2O. The enzyme catalyses a (3S)-3-hydroxyacyl-CoA + NAD(+) = a 3-oxoacyl-CoA + NADH + H(+). It catalyses the reaction (3S)-3-hydroxybutanoyl-CoA = (3R)-3-hydroxybutanoyl-CoA. The protein operates within lipid metabolism; fatty acid beta-oxidation. In terms of biological role, catalyzes the formation of a hydroxyacyl-CoA by addition of water on enoyl-CoA. Also exhibits 3-hydroxyacyl-CoA epimerase and 3-hydroxyacyl-CoA dehydrogenase activities. The chain is Fatty acid oxidation complex subunit alpha from Escherichia coli (strain SMS-3-5 / SECEC).